Here is a 259-residue protein sequence, read N- to C-terminus: Proteasome subunit alpha (259 aa).

Positions 226-259 (LAEGSATSATSATPGEAEAPATAPEGDVDTGSNG) are disordered. Positions 227 to 250 (AEGSATSATSATPGEAEAPATAPE) are enriched in low complexity.

Belongs to the peptidase T1A family. The 20S proteasome core is composed of 14 alpha and 14 beta subunits that assemble into four stacked heptameric rings, resulting in a barrel-shaped structure. The two inner rings, each composed of seven catalytic beta subunits, are sandwiched by two outer rings, each composed of seven alpha subunits. The catalytic chamber with the active sites is on the inside of the barrel. Has a gated structure, the ends of the cylinder being occluded by the N-termini of the alpha-subunits. Is capped by the proteasome-associated ATPase, ARC.

The protein resides in the cytoplasm. The protein operates within protein degradation; proteasomal Pup-dependent pathway. The formation of the proteasomal ATPase ARC-20S proteasome complex, likely via the docking of the C-termini of ARC into the intersubunit pockets in the alpha-rings, may trigger opening of the gate for substrate entry. Interconversion between the open-gate and close-gate conformations leads to a dynamic regulation of the 20S proteasome proteolysis activity. Component of the proteasome core, a large protease complex with broad specificity involved in protein degradation. In Streptosporangium roseum (strain ATCC 12428 / DSM 43021 / JCM 3005 / KCTC 9067 / NCIMB 10171 / NRRL 2505 / NI 9100), this protein is Proteasome subunit alpha.